A 312-amino-acid polypeptide reads, in one-letter code: Methionyl-tRNA formyltransferase (312 aa).

110–113 contacts (6S)-5,6,7,8-tetrahydrofolate; that stretch reads SLLP.

The protein belongs to the Fmt family.

The enzyme catalyses L-methionyl-tRNA(fMet) + (6R)-10-formyltetrahydrofolate = N-formyl-L-methionyl-tRNA(fMet) + (6S)-5,6,7,8-tetrahydrofolate + H(+). Attaches a formyl group to the free amino group of methionyl-tRNA(fMet). The formyl group appears to play a dual role in the initiator identity of N-formylmethionyl-tRNA by promoting its recognition by IF2 and preventing the misappropriation of this tRNA by the elongation apparatus. This chain is Methionyl-tRNA formyltransferase, found in Streptococcus suis (strain 05ZYH33).